Here is a 372-residue protein sequence, read N- to C-terminus: D-alanine--D-alanine ligase (372 aa).

Residues 145 to 349 (KTVLRAGGIP…CPNLLDQLIE (205 aa)) form the ATP-grasp domain. 176–231 (DRWGTSELFVKAVSLGSSVATLPVKTETEFTKAVKEVFRYDDRLMVEPRIRGREIE) lines the ATP pocket. The Mg(2+) site is built by D303, E316, and N318.

This sequence belongs to the D-alanine--D-alanine ligase family. Requires Mg(2+) as cofactor. The cofactor is Mn(2+).

The protein resides in the cytoplasm. The enzyme catalyses 2 D-alanine + ATP = D-alanyl-D-alanine + ADP + phosphate + H(+). The protein operates within cell wall biogenesis; peptidoglycan biosynthesis. Its function is as follows. Cell wall formation. The protein is D-alanine--D-alanine ligase of Coxiella burnetii (strain Dugway 5J108-111).